A 286-amino-acid polypeptide reads, in one-letter code: ATP synthase gamma chain (286 aa).

The protein belongs to the ATPase gamma chain family. In terms of assembly, F-type ATPases have 2 components, CF(1) - the catalytic core - and CF(0) - the membrane proton channel. CF(1) has five subunits: alpha(3), beta(3), gamma(1), delta(1), epsilon(1). CF(0) has three main subunits: a, b and c.

Its subcellular location is the cell inner membrane. Functionally, produces ATP from ADP in the presence of a proton gradient across the membrane. The gamma chain is believed to be important in regulating ATPase activity and the flow of protons through the CF(0) complex. This Shewanella loihica (strain ATCC BAA-1088 / PV-4) protein is ATP synthase gamma chain.